Consider the following 556-residue polypeptide: HIRA-interacting protein 3 (556 aa).

S27 is subject to Phosphoserine. Basic and acidic residues predominate over residues 64-77 (DEAASREDKLDLTK). Residues 64-426 (DEAASREDKL…GRRGEDHPAV (363 aa)) are disordered. Position 84 is a phosphothreonine (T84). Phosphoserine occurs at positions 87, 98, 100, 125, 142, 143, 159, and 160. Low complexity predominate over residues 99–108 (ESESGSEASS). Residues 126–158 (PAKEENPRRASKAVEESSDEERQRDLPAQRGEE) are compositionally biased toward basic and acidic residues. A compositionally biased stretch (basic residues) spans 168-177 (KGKTRKKPVV). Phosphoserine occurs at positions 196, 199, 223, and 227. The span at 209–224 (KKVEGNKGTKSLKESE) shows a compositional bias: basic and acidic residues. Acidic residues predominate over residues 240 to 254 (EEEVEEEEKEEDEEK). Positions 260 to 269 (RTRSNGRRKS) are enriched in basic residues. A phosphoserine mark is found at S289 and S291. Over residues 304-322 (DSGRDREPPVQRKSEDRTQ) the composition is skewed to basic and acidic residues. Phosphoserine occurs at positions 330, 332, 333, and 357. T358 bears the Phosphothreonine mark. Phosphoserine occurs at positions 359, 363, 370, and 372. Residues 385-396 (RSSKKSSRKGRT) show a composition bias toward basic residues. An interaction with the histone H2A-H2B complex region spans residues 403–527 (SDGSPEAKGG…APPGELYRRT (125 aa)). T471 bears the Phosphothreonine mark. A disordered region spans residues 502–556 (SGRPRRRTAWNPLGEAAPPGELYRRTLDSDEERPRPAPPDWSHMRGIISSDGESN). Basic and acidic residues predominate over residues 523-536 (LYRRTLDSDEERPR). Phosphoserine is present on residues S530, S550, S551, and S555.

In terms of assembly, interacts (via C-terminus) with histone H2A-H2B dimers; the interaction is direct. Interacts with HIRA. Interacts with CK2. Post-translationally, phosphorylated by CK2. As to expression, widely expressed. Isoform 1 is predominant in skeletal muscle. Isoform 2 is predominant in liver and heart.

The protein resides in the nucleus. In terms of biological role, histone chaperone that carries a H2A-H2B histone complex and facilitates its deposition onto chromatin. In Homo sapiens (Human), this protein is HIRA-interacting protein 3 (HIRIP3).